Reading from the N-terminus, the 974-residue chain is MSSSPQNEAEAREKMRELMSRPPSSRPADFVNPLEKIEQLLTCPICLDRYKQPKLLPCQHTFCYPCLESCADTLHRNLKCPECRAEHNIPYDGVKAFQPNYTLTGFLEIHLQATPESAAEIEEYIHRYNLERCKICDEKADCEPCAHCDRKACKECRQTHMDMLKRDMSRLLNQVKRLANRITEASDNLSKGVDMMTMNCETTKAEIKEYFHRYQRDLKKKEDNFLMEVDTFQATETRNMSNLRDVLEIESSNMSEAVSRLDAAIKGECSIEDSELVRMKNTFTEGLEYLRNFQPDADELFNRKLRFSAGDDAAKLPAAITTSGELCVLVPQFSGRYLPLEQSYLPRPFRLPLESDSYRVKSDERASMRDREADRTSSRHSHRNPEPDESSIRYRRRQQLEDEAWNRLRNSSAAPSLLTTSVTADSSSRTSPWAADRVTRSVEPTKSRPTSLIVPNTETPRTVSPASKPPLPPQSVERVERTEDASPAPLPQLPIRKPPLPRQQSSNDDSLNEKVETIRRAHQQRQDASRAASRAVSSEESEGEDFPVSTNRGRIRIVCRAASVNRDDGLMSMIPGTGTIINVPPPQHQLPASAPITNGTSEQVAIPVTHFTGEEDESDIVVPAWLQRRRQRFQRSRTNPDIQAQFTSARVQQLLAERQSRLDSSTTTDEEKEKLAVLRQRGRSASREAGEWRARGRPRAVFGRKGAKDGELNWPRGICALSGGLVATCDSSNHRVCVFDKDGKFVRQFGGYGAGAGQLDSAAGLASSKLRVIVSDRYNHRISVFGLEGDHLFSFGGHGQGNAKFNNPWGVAVDDLGSIYVADKDNHRVQVFDKNGQFIAKFGSFGHLPGQLNSPLFIAVSRVTHHVYVSDSSNHRISVFDPHGVHLFSFGEEGFHGGQFKFPRGIAIDSQENLIIADSGNNRIQVFDAQGQFVSSFGTWGGGAGQLKGVEDVCVTADGSIVVTDRENHRIQIF.

A disordered region spans residues 1-29; it reads MSSSPQNEAEAREKMRELMSRPPSSRPAD. The segment covering 9-19 has biased composition (basic and acidic residues); the sequence is AEAREKMRELM. The segment at 43-84 adopts an RING-type zinc-finger fold; that stretch reads CPICLDRYKQPKLLPCQHTFCYPCLESCADTLHRNLKCPECR. Disordered stretches follow at residues 360–395 and 416–548; these read VKSD…IRYR and SLLT…DFPV. The span at 416-431 shows a compositional bias: polar residues; it reads SLLTTSVTADSSSRTS. The span at 437 to 446 shows a compositional bias: basic and acidic residues; that stretch reads RVTRSVEPTK. Residues 447 to 465 are compositionally biased toward polar residues; the sequence is SRPTSLIVPNTETPRTVSP. A compositionally biased stretch (pro residues) spans 488–501; that stretch reads APLPQLPIRKPPLP. The segment covering 511 to 528 has biased composition (basic and acidic residues); that stretch reads LNEKVETIRRAHQQRQDA. The segment covering 529 to 538 has biased composition (low complexity); that stretch reads SRAASRAVSS. NHL repeat units follow at residues 699-742, 746-788, 792-835, 839-883, 887-930, and 934-974; these read RAVF…FDKD, VRQF…FGLE, LFSF…FDKN, IAKF…FDPH, LFSF…FDAQ, and VSSF…IQIF.

Interacts with ubc-13.

The polypeptide is RING finger protein nhl-1 (Caenorhabditis elegans).